The primary structure comprises 212 residues: MSLFDKKHLVSPADALPGRNTPMPVATLHAVNGHSMTNVPDGMEIAIFAMGCFWGVERLFWQLPGVYSTAAGYTGGYTPNPTYREVCSGDTGHAEAVRIVYDPSVISYEQLLQVFWENHDPAQGMRQGNDHSTQYRSAIYPLTPEQDAAARASLERFQAAMLAADDDRRITTEIANATPFYYAEDDHQQYLHKNPYGYCGIGGIGVCLPPEA.

Cys-52 is an active-site residue.

Belongs to the MsrA Met sulfoxide reductase family.

The enzyme catalyses L-methionyl-[protein] + [thioredoxin]-disulfide + H2O = L-methionyl-(S)-S-oxide-[protein] + [thioredoxin]-dithiol. The catalysed reaction is [thioredoxin]-disulfide + L-methionine + H2O = L-methionine (S)-S-oxide + [thioredoxin]-dithiol. Has an important function as a repair enzyme for proteins that have been inactivated by oxidation. Catalyzes the reversible oxidation-reduction of methionine sulfoxide in proteins to methionine. This chain is Peptide methionine sulfoxide reductase MsrA, found in Escherichia coli O6:K15:H31 (strain 536 / UPEC).